Here is a 282-residue protein sequence, read N- to C-terminus: Phosphate import ATP-binding protein PstB (282 aa).

Residues 1-33 form a disordered region; it reads MNMAETQLNPIARPTAPAGFDPAQSGQSQAPSR. The ABC transporter domain occupies 36 to 277; the sequence is IEINDLNFFY…PVRKETEDYI (242 aa). 68-75 is an ATP binding site; the sequence is GPSGCGKS.

It belongs to the ABC transporter superfamily. Phosphate importer (TC 3.A.1.7) family. In terms of assembly, the complex is composed of two ATP-binding proteins (PstB), two transmembrane proteins (PstC and PstA) and a solute-binding protein (PstS).

The protein localises to the cell inner membrane. It carries out the reaction phosphate(out) + ATP + H2O = ADP + 2 phosphate(in) + H(+). Its function is as follows. Part of the ABC transporter complex PstSACB involved in phosphate import. Responsible for energy coupling to the transport system. This Paraburkholderia xenovorans (strain LB400) protein is Phosphate import ATP-binding protein PstB.